Here is a 264-residue protein sequence, read N- to C-terminus: MYAQPKLTSAEYVQHHMSHWKLNLHNFTFTDGGFWTLNLDTLIISVVLGALFILIFYIVARRATASVPGKWQNAIEMAVEAVDGTVKDSFHGDRSLVAPLALTIFIWVFLMNFMDLVPVDLIPRLFQMGGVEHFKAVPTADPTLTFAMSITVFVLVIFYNFKMKGAIGLGKEVLSRPFGWYLMPINVIFRLIDEGVKPISLALRLFGNLFAGELIFILIALLPWWSQFTLGMVWTLFHLLVITVQAFIFMMLTVVYISLAAESH.

Transmembrane regions (helical) follow at residues L39–V59, V97–V117, T139–Y159, L205–W225, and L239–L259.

Belongs to the ATPase A chain family. In terms of assembly, F-type ATPases have 2 components, CF(1) - the catalytic core - and CF(0) - the membrane proton channel. CF(1) has five subunits: alpha(3), beta(3), gamma(1), delta(1), epsilon(1). CF(0) has three main subunits: a(1), b(2) and c(9-12). The alpha and beta chains form an alternating ring which encloses part of the gamma chain. CF(1) is attached to CF(0) by a central stalk formed by the gamma and epsilon chains, while a peripheral stalk is formed by the delta and b chains.

It is found in the cell inner membrane. Its function is as follows. Key component of the proton channel; it plays a direct role in the translocation of protons across the membrane. The chain is ATP synthase subunit a from Coxiella burnetii (strain CbuK_Q154) (Coxiella burnetii (strain Q154)).